Consider the following 706-residue polypeptide: Methionine--tRNA ligase (706 aa).

Positions 13 to 23 (PYANGSIHLGH) match the 'HIGH' region motif. The Zn(2+) site is built by Cys-144, Cys-147, Cys-157, and Cys-160. The short motif at 336 to 340 (KMSKS) is the 'KMSKS' region element. Residue Lys-339 participates in ATP binding. Residues 570–593 (QQTMNTETESHSPQRHGQAQQHPV) form a disordered region. The tRNA-binding domain maps to 604–706 (DFVKIDLRIA…SGAQPGMRVK (103 aa)).

The protein belongs to the class-I aminoacyl-tRNA synthetase family. MetG type 1 subfamily. As to quaternary structure, homodimer. The cofactor is Zn(2+).

The protein resides in the cytoplasm. The enzyme catalyses tRNA(Met) + L-methionine + ATP = L-methionyl-tRNA(Met) + AMP + diphosphate. Is required not only for elongation of protein synthesis but also for the initiation of all mRNA translation through initiator tRNA(fMet) aminoacylation. This chain is Methionine--tRNA ligase, found in Nitrosomonas europaea (strain ATCC 19718 / CIP 103999 / KCTC 2705 / NBRC 14298).